A 278-amino-acid chain; its full sequence is NAD-dependent protein deacylase (278 aa).

The Deacetylase sirtuin-type domain occupies 22–270 (RSRIFHRDSA…PEYIREFLTT (249 aa)). 46–65 (GAGISAESGIRTFRADDGLW) contributes to the NAD(+) binding site. Residues Tyr-90 and Arg-93 each coordinate substrate. Residue 127 to 130 (QNID) participates in NAD(+) binding. His-145 (proton acceptor) is an active-site residue. Zn(2+)-binding residues include Cys-153 and Cys-172. NAD(+) is bound by residues 212–214 (GTS), 238–240 (NLE), and Ala-256.

It belongs to the sirtuin family. Class III subfamily. The cofactor is Zn(2+).

The protein resides in the cytoplasm. It carries out the reaction N(6)-acetyl-L-lysyl-[protein] + NAD(+) + H2O = 2''-O-acetyl-ADP-D-ribose + nicotinamide + L-lysyl-[protein]. It catalyses the reaction N(6)-succinyl-L-lysyl-[protein] + NAD(+) + H2O = 2''-O-succinyl-ADP-D-ribose + nicotinamide + L-lysyl-[protein]. The enzyme catalyses N(6)-(2-hydroxyisobutanoyl)-L-lysyl-[protein] + NAD(+) + H2O = 2''-O-(2-hydroxyisobutanoyl)-ADP-D-ribose + nicotinamide + L-lysyl-[protein]. In terms of biological role, NAD-dependent lysine deacetylase that specifically removes acetyl groups on target proteins. Also acts as a protein-lysine deacylase by mediating protein desuccinylation and de-2-hydroxyisobutyrylation. Modulates the activities of several proteins which are inactive in their acylated form. The protein is NAD-dependent protein deacylase of Yersinia pestis.